The following is a 278-amino-acid chain: Shikimate dehydrogenase (NADP(+)) (278 aa).

Residues 18–20 (SRS) and Thr-65 contribute to the shikimate site. Lys-69 serves as the catalytic Proton acceptor. Glu-80 is an NADP(+) binding site. Asn-89 and Asp-104 together coordinate shikimate. NADP(+) is bound by residues 129-133 (GAGGS) and Leu-218. Tyr-220 lines the shikimate pocket. Gly-241 is a binding site for NADP(+).

It belongs to the shikimate dehydrogenase family. In terms of assembly, homodimer.

It catalyses the reaction shikimate + NADP(+) = 3-dehydroshikimate + NADPH + H(+). Its pathway is metabolic intermediate biosynthesis; chorismate biosynthesis; chorismate from D-erythrose 4-phosphate and phosphoenolpyruvate: step 4/7. Involved in the biosynthesis of the chorismate, which leads to the biosynthesis of aromatic amino acids. Catalyzes the reversible NADPH linked reduction of 3-dehydroshikimate (DHSA) to yield shikimate (SA). The chain is Shikimate dehydrogenase (NADP(+)) from Rhodopseudomonas palustris (strain TIE-1).